Reading from the N-terminus, the 398-residue chain is Phosphoglycerate kinase (398 aa).

Substrate-binding positions include 24-26 (DFN), Arg40, 63-66 (HMGR), Arg122, and Arg155. ATP is bound by residues Lys206, Gly294, Glu325, and 354-357 (GGDS).

The protein belongs to the phosphoglycerate kinase family. Monomer.

The protein resides in the cytoplasm. The catalysed reaction is (2R)-3-phosphoglycerate + ATP = (2R)-3-phospho-glyceroyl phosphate + ADP. Its pathway is carbohydrate degradation; glycolysis; pyruvate from D-glyceraldehyde 3-phosphate: step 2/5. In Picosynechococcus sp. (strain ATCC 27264 / PCC 7002 / PR-6) (Agmenellum quadruplicatum), this protein is Phosphoglycerate kinase.